A 208-amino-acid chain; its full sequence is Imidazole glycerol phosphate synthase subunit HisH (208 aa).

In terms of domain architecture, Glutamine amidotransferase type-1 spans 1–206 (MIVIIDYDTG…KEVTYSCKSS (206 aa)). The active-site Nucleophile is the Cys79. Catalysis depends on residues His181 and Glu183.

Heterodimer of HisH and HisF.

The protein localises to the cytoplasm. It catalyses the reaction 5-[(5-phospho-1-deoxy-D-ribulos-1-ylimino)methylamino]-1-(5-phospho-beta-D-ribosyl)imidazole-4-carboxamide + L-glutamine = D-erythro-1-(imidazol-4-yl)glycerol 3-phosphate + 5-amino-1-(5-phospho-beta-D-ribosyl)imidazole-4-carboxamide + L-glutamate + H(+). The catalysed reaction is L-glutamine + H2O = L-glutamate + NH4(+). The protein operates within amino-acid biosynthesis; L-histidine biosynthesis; L-histidine from 5-phospho-alpha-D-ribose 1-diphosphate: step 5/9. Its function is as follows. IGPS catalyzes the conversion of PRFAR and glutamine to IGP, AICAR and glutamate. The HisH subunit catalyzes the hydrolysis of glutamine to glutamate and ammonia as part of the synthesis of IGP and AICAR. The resulting ammonia molecule is channeled to the active site of HisF. In Listeria monocytogenes serotype 4a (strain HCC23), this protein is Imidazole glycerol phosphate synthase subunit HisH.